A 265-amino-acid polypeptide reads, in one-letter code: Mlc titration factor A (265 aa).

Residues His-111, His-148, His-152, and Glu-211 each contribute to the Zn(2+) site.

The protein belongs to the MtfA family. In terms of assembly, interacts with Mlc. Zn(2+) is required as a cofactor.

It is found in the cytoplasm. Functionally, involved in the modulation of the activity of the glucose-phosphotransferase system (glucose-PTS). Interacts with the transcriptional repressor Mlc, preventing its interaction with DNA and leading to the modulation of expression of genes regulated by Mlc, including ptsG, which encodes the PTS system glucose-specific EIICB component. Its function is as follows. Shows zinc-dependent metallopeptidase activity. The chain is Mlc titration factor A from Salmonella schwarzengrund (strain CVM19633).